The following is a 104-amino-acid chain: Co-chaperonin GroES 1 (104 aa).

This sequence belongs to the GroES chaperonin family. In terms of assembly, heptamer of 7 subunits arranged in a ring. Interacts with the chaperonin GroEL.

It is found in the cytoplasm. In terms of biological role, together with the chaperonin GroEL, plays an essential role in assisting protein folding. The GroEL-GroES system forms a nano-cage that allows encapsulation of the non-native substrate proteins and provides a physical environment optimized to promote and accelerate protein folding. GroES binds to the apical surface of the GroEL ring, thereby capping the opening of the GroEL channel. The chain is Co-chaperonin GroES 1 from Mesorhizobium japonicum (strain LMG 29417 / CECT 9101 / MAFF 303099) (Mesorhizobium loti (strain MAFF 303099)).